Reading from the N-terminus, the 430-residue chain is MTASLKANDGSAELAALMTDLGRRARAAARVLALAPPEQKNRALEAMERAIRAGAAAILDANAEDVADAKGSGANSAFLDRLTLTPARVEAMAEGIAVVRGIADPVGAVTESWQRPNGMTIERVRVPLGVVAVIFESRPNVTADAGVLCLKSGNAVILRGGSESFRSGRAIHACLVQGLREAGLPEAAITLVPTRERAAVGLLLGGLNGTVDVIVPRGGKSLVARVESEARVPVFAHLEGINHVYVDRTADLDMAKSIVLNAKMRRTGVCGAAETLLIDRAAADTHLAPLVGMLIDAGCEVRGDDAVQRADARVKPATDQDWDTEYLDAVIAAKVVDDVDDAITHIHEHGSHHTDAIVAEDAKTAAKFLGEVDSAIVLHNASTQFADGGEFGFGAEIGIATGKFHARGPVGAEQLTTFKYRIHGTGQTRP.

It belongs to the gamma-glutamyl phosphate reductase family.

It localises to the cytoplasm. It catalyses the reaction L-glutamate 5-semialdehyde + phosphate + NADP(+) = L-glutamyl 5-phosphate + NADPH + H(+). It functions in the pathway amino-acid biosynthesis; L-proline biosynthesis; L-glutamate 5-semialdehyde from L-glutamate: step 2/2. Its function is as follows. Catalyzes the NADPH-dependent reduction of L-glutamate 5-phosphate into L-glutamate 5-semialdehyde and phosphate. The product spontaneously undergoes cyclization to form 1-pyrroline-5-carboxylate. The sequence is that of Gamma-glutamyl phosphate reductase from Rhodopseudomonas palustris (strain BisB5).